We begin with the raw amino-acid sequence, 484 residues long: Bifunctional protein HldE (484 aa).

The tract at residues 1-320 (MDFSSITVLC…AELNAQDADA (320 aa)) is ribokinase. 195–198 (NARE) contacts ATP. Residue Asp265 is part of the active site. Residues 349-484 (FTNGCFDIIH…RIRAAGAADR (136 aa)) form a cytidylyltransferase region.

It in the N-terminal section; belongs to the carbohydrate kinase PfkB family. In the C-terminal section; belongs to the cytidylyltransferase family. Homodimer.

It carries out the reaction D-glycero-beta-D-manno-heptose 7-phosphate + ATP = D-glycero-beta-D-manno-heptose 1,7-bisphosphate + ADP + H(+). It catalyses the reaction D-glycero-beta-D-manno-heptose 1-phosphate + ATP + H(+) = ADP-D-glycero-beta-D-manno-heptose + diphosphate. Its pathway is nucleotide-sugar biosynthesis; ADP-L-glycero-beta-D-manno-heptose biosynthesis; ADP-L-glycero-beta-D-manno-heptose from D-glycero-beta-D-manno-heptose 7-phosphate: step 1/4. The protein operates within nucleotide-sugar biosynthesis; ADP-L-glycero-beta-D-manno-heptose biosynthesis; ADP-L-glycero-beta-D-manno-heptose from D-glycero-beta-D-manno-heptose 7-phosphate: step 3/4. In terms of biological role, catalyzes the phosphorylation of D-glycero-D-manno-heptose 7-phosphate at the C-1 position to selectively form D-glycero-beta-D-manno-heptose-1,7-bisphosphate. Its function is as follows. Catalyzes the ADP transfer from ATP to D-glycero-beta-D-manno-heptose 1-phosphate, yielding ADP-D-glycero-beta-D-manno-heptose. This is Bifunctional protein HldE from Gluconacetobacter diazotrophicus (strain ATCC 49037 / DSM 5601 / CCUG 37298 / CIP 103539 / LMG 7603 / PAl5).